The following is an 89-amino-acid chain: Small ribosomal subunit protein uS14 (89 aa).

The protein belongs to the universal ribosomal protein uS14 family. As to quaternary structure, part of the 30S ribosomal subunit. Contacts proteins S3 and S10.

Its function is as follows. Binds 16S rRNA, required for the assembly of 30S particles and may also be responsible for determining the conformation of the 16S rRNA at the A site. This chain is Small ribosomal subunit protein uS14, found in Amoebophilus asiaticus (strain 5a2).